We begin with the raw amino-acid sequence, 430 residues long: Adenylosuccinate synthetase (430 aa).

GTP-binding positions include 12–18 (GDEGKGK) and 40–42 (GHT). Aspartate 13 serves as the catalytic Proton acceptor. Residues aspartate 13 and glycine 40 each coordinate Mg(2+). IMP contacts are provided by residues 13–16 (DEGK), 38–41 (NAGH), threonine 128, arginine 142, glutamine 223, threonine 238, and arginine 302. Residue histidine 41 is the Proton donor of the active site. Residue 298–304 (TTTGRPR) participates in substrate binding. GTP is bound by residues arginine 304, 330–332 (SID), and 412–414 (SVG).

Belongs to the adenylosuccinate synthetase family. Homodimer. Mg(2+) is required as a cofactor.

Its subcellular location is the cytoplasm. The catalysed reaction is IMP + L-aspartate + GTP = N(6)-(1,2-dicarboxyethyl)-AMP + GDP + phosphate + 2 H(+). It functions in the pathway purine metabolism; AMP biosynthesis via de novo pathway; AMP from IMP: step 1/2. Functionally, plays an important role in the de novo pathway of purine nucleotide biosynthesis. Catalyzes the first committed step in the biosynthesis of AMP from IMP. In Streptococcus pyogenes serotype M5 (strain Manfredo), this protein is Adenylosuccinate synthetase.